The primary structure comprises 58 residues: Large ribosomal subunit protein uL30 (58 aa).

Belongs to the universal ribosomal protein uL30 family. Part of the 50S ribosomal subunit.

This Vibrio campbellii (strain ATCC BAA-1116) protein is Large ribosomal subunit protein uL30.